The sequence spans 67 residues: Conotoxin Im3.1 (67 aa).

The first 20 residues, 1-20 (MMSTLVVLLTICLLMLPLTA), serve as a signal peptide directing secretion. Positions 21–52 (RQLDADQLADQLAERMEDISADQNRWFDPVKR) are excised as a propeptide. 3 disulfide bridges follow: cysteine 53–cysteine 63, cysteine 54–cysteine 61, and cysteine 59–cysteine 64.

Belongs to the conotoxin M superfamily. In terms of tissue distribution, expressed by the venom duct.

It localises to the secreted. In terms of biological role, probable neurotoxin. This Conus imperialis (Imperial cone) protein is Conotoxin Im3.1.